Here is a 524-residue protein sequence, read N- to C-terminus: Cytochrome P450 1A1 (524 aa).

Residues 33–44 are mitochondrial targeting signal; it reads WQPRLPKGLKSP. Residue Ser-71 is glycosylated (O-linked (GlcNAc) serine). Position 228 (Phe-228) interacts with substrate. Cys-461 is a binding site for heme.

It belongs to the cytochrome P450 family. Interacts with cytosolic chaperones HSP70 and HSP90; this interaction is required for initial targeting to mitochondria. Interacts (via mitochondrial targeting signal) with TOMM40 (via N-terminus); this interaction is required for translocation across the mitochondrial outer membrane. Heme is required as a cofactor.

Its subcellular location is the endoplasmic reticulum membrane. The protein localises to the mitochondrion inner membrane. It localises to the microsome membrane. It is found in the cytoplasm. The catalysed reaction is an organic molecule + reduced [NADPH--hemoprotein reductase] + O2 = an alcohol + oxidized [NADPH--hemoprotein reductase] + H2O + H(+). The enzyme catalyses estrone + reduced [NADPH--hemoprotein reductase] + O2 = 2-hydroxyestrone + oxidized [NADPH--hemoprotein reductase] + H2O + H(+). It catalyses the reaction estrone + reduced [NADPH--hemoprotein reductase] + O2 = 4-hydroxyestrone + oxidized [NADPH--hemoprotein reductase] + H2O + H(+). It carries out the reaction estrone + reduced [NADPH--hemoprotein reductase] + O2 = 6alpha-hydroxyestrone + oxidized [NADPH--hemoprotein reductase] + H2O + H(+). The catalysed reaction is estrone + reduced [NADPH--hemoprotein reductase] + O2 = 15alpha-hydroxyestrone + oxidized [NADPH--hemoprotein reductase] + H2O + H(+). The enzyme catalyses estrone + reduced [NADPH--hemoprotein reductase] + O2 = 16alpha-hydroxyestrone + oxidized [NADPH--hemoprotein reductase] + H2O + H(+). It catalyses the reaction 17beta-estradiol + reduced [NADPH--hemoprotein reductase] + O2 = 2-hydroxy-17beta-estradiol + oxidized [NADPH--hemoprotein reductase] + H2O + H(+). It carries out the reaction 17beta-estradiol + reduced [NADPH--hemoprotein reductase] + O2 = 4-hydroxy-17beta-estradiol + oxidized [NADPH--hemoprotein reductase] + H2O + H(+). The catalysed reaction is 17beta-estradiol + reduced [NADPH--hemoprotein reductase] + O2 = 6alpha-hydroxy-17beta-estradiol + oxidized [NADPH--hemoprotein reductase] + H2O + H(+). The enzyme catalyses 17beta-estradiol + reduced [NADPH--hemoprotein reductase] + O2 = 7alpha-hydroxy-17beta-estradiol + oxidized [NADPH--hemoprotein reductase] + H2O + H(+). It catalyses the reaction 17beta-estradiol + reduced [NADPH--hemoprotein reductase] + O2 = 15alpha-hydroxy-17beta-estradiol + oxidized [NADPH--hemoprotein reductase] + H2O + H(+). It carries out the reaction (5Z,8Z,11Z)-eicosatrienoate + reduced [NADPH--hemoprotein reductase] + O2 = 19-hydroxy-(5Z,8Z,11Z)-eicosatrienoate + oxidized [NADPH--hemoprotein reductase] + H2O + H(+). The catalysed reaction is (5Z,8Z,11Z,14Z)-eicosatetraenoate + reduced [NADPH--hemoprotein reductase] + O2 = 16-hydroxy-(5Z,8Z,11Z,14Z)-eicosatetraenoate + oxidized [NADPH--hemoprotein reductase] + H2O + H(+). The enzyme catalyses (5Z,8Z,11Z,14Z)-eicosatetraenoate + reduced [NADPH--hemoprotein reductase] + O2 = 17-hydroxy-(5Z,8Z,11Z,14Z)-eicosatetraenoate + oxidized [NADPH--hemoprotein reductase] + H2O + H(+). It catalyses the reaction (5Z,8Z,11Z,14Z)-eicosatetraenoate + reduced [NADPH--hemoprotein reductase] + O2 = 18-hydroxy-(5Z,8Z,11Z,14Z)-eicosatetraenoate + oxidized [NADPH--hemoprotein reductase] + H2O + H(+). It carries out the reaction (5Z,8Z,11Z,14Z)-eicosatetraenoate + reduced [NADPH--hemoprotein reductase] + O2 = 19-hydroxy-(5Z,8Z,11Z,14Z)-eicosatetraenoate + oxidized [NADPH--hemoprotein reductase] + H2O + H(+). The catalysed reaction is (5Z,8Z,11Z,14Z,17Z)-eicosapentaenoate + reduced [NADPH--hemoprotein reductase] + O2 = 19-hydroxy-(5Z,8Z,11Z,14Z,17Z)-eicosapentaenoate + oxidized [NADPH--hemoprotein reductase] + H2O + H(+). The enzyme catalyses (5Z,8Z,11Z,14Z)-eicosatetraenoate + reduced [NADPH--hemoprotein reductase] + O2 = (8R,9S)-epoxy-(5Z,11Z,14Z)-eicosatrienoate + oxidized [NADPH--hemoprotein reductase] + H2O + H(+). It catalyses the reaction (5Z,8Z,11Z,14Z)-eicosatetraenoate + reduced [NADPH--hemoprotein reductase] + O2 = (11R,12S)-epoxy-(5Z,8Z,14Z)-eicosatrienoate + oxidized [NADPH--hemoprotein reductase] + H2O + H(+). It carries out the reaction (5Z,8Z,11Z,14Z)-eicosatetraenoate + reduced [NADPH--hemoprotein reductase] + O2 = (14S,15R)-epoxy-(5Z,8Z,11Z)-eicosatrienoate + oxidized [NADPH--hemoprotein reductase] + H2O + H(+). The catalysed reaction is (5Z,8Z,11Z,14Z)-eicosatetraenoate + reduced [NADPH--hemoprotein reductase] + O2 = (14R,15S)-epoxy-(5Z,8Z,11Z)-eicosatrienoate + oxidized [NADPH--hemoprotein reductase] + H2O + H(+). The enzyme catalyses (5Z,8Z,11Z,14Z,17Z)-eicosapentaenoate + reduced [NADPH--hemoprotein reductase] + O2 = (17R,18S)-epoxy-(5Z,8Z,11Z,14Z)-eicosatetraenoate + oxidized [NADPH--hemoprotein reductase] + H2O + H(+). It catalyses the reaction (4Z,7Z,10Z,13Z,16Z,19Z)-docosahexaenoate + reduced [NADPH--hemoprotein reductase] + O2 = (19S,20R)-epoxy-(4Z,7Z,10Z,13Z,16Z)-docosapentaenoate + oxidized [NADPH--hemoprotein reductase] + H2O + H(+). It carries out the reaction (4Z,7Z,10Z,13Z,16Z,19Z)-docosahexaenoate + reduced [NADPH--hemoprotein reductase] + O2 = (19R,20S)-epoxy-(4Z,7Z,10Z,13Z,16Z)-docosapentaenoate + oxidized [NADPH--hemoprotein reductase] + H2O + H(+). The catalysed reaction is all-trans-retinol + reduced [NADPH--hemoprotein reductase] + O2 = all-trans-retinal + oxidized [NADPH--hemoprotein reductase] + 2 H2O + H(+). The enzyme catalyses all-trans-retinal + reduced [NADPH--hemoprotein reductase] + O2 = all-trans-retinoate + oxidized [NADPH--hemoprotein reductase] + H2O + 2 H(+). It catalyses the reaction (13S)-hydroperoxy-(9Z,11E)-octadecadienoate = 13-oxo-(9Z,11E)-octadecadienoate + H2O. It carries out the reaction (12S)-hydroperoxy-(5Z,8Z,10E,14Z)-eicosatetraenoate = 12-oxo-(5Z,8Z,10E,14Z)-eicosatetraenoate + H2O. The catalysed reaction is (15S)-hydroperoxy-(5Z,8Z,11Z,13E)-eicosatetraenoate = 15-oxo-(5Z,8Z,11Z,13E)-eicosatetraenoate + H2O. The enzyme catalyses (5S)-hydroperoxy-(6E,8Z,11Z,14Z)-eicosatetraenoate = 5-oxo-(6E,8Z,11Z,14Z)-eicosatetraenoate + H2O. Its pathway is steroid hormone biosynthesis. It functions in the pathway lipid metabolism; fatty acid metabolism. It participates in cofactor metabolism; retinol metabolism. Functionally, a cytochrome P450 monooxygenase involved in the metabolism of various endogenous substrates, including fatty acids, steroid hormones and vitamins. Mechanistically, uses molecular oxygen inserting one oxygen atom into a substrate, and reducing the second into a water molecule, with two electrons provided by NADPH via cytochrome P450 reductase (CPR; NADPH-ferrihemoprotein reductase). Catalyzes the hydroxylation of carbon-hydrogen bonds. Exhibits high catalytic activity for the formation of hydroxyestrogens from estrone (E1) and 17beta-estradiol (E2), namely 2-hydroxy E1 and E2, as well as D-ring hydroxylated E1 and E2 at the C15alpha and C16alpha positions. Displays different regioselectivities for polyunsaturated fatty acids (PUFA) hydroxylation. Catalyzes the epoxidation of double bonds of certain PUFA. Converts arachidonic acid toward epoxyeicosatrienoic acid (EET) regioisomers, 8,9-, 11,12-, and 14,15-EET, that function as lipid mediators in the vascular system. Displays an absolute stereoselectivity in the epoxidation of eicosapentaenoic acid (EPA) producing the 17(R),18(S) enantiomer. May play an important role in all-trans retinoic acid biosynthesis in extrahepatic tissues. Catalyzes two successive oxidative transformation of all-trans retinol to all-trans retinal and then to the active form all-trans retinoic acid. May also participate in eicosanoids metabolism by converting hydroperoxide species into oxo metabolites (lipoxygenase-like reaction, NADPH-independent). This is Cytochrome P450 1A1 (CYP1A1) from Canis lupus familiaris (Dog).